The primary structure comprises 353 residues: Endophilin-A3 (353 aa).

The tract at residues Met1–Ile21 is membrane-binding amphipathic helix. The 232-residue stretch at Ser18 to Ser249 folds into the BAR domain. Residues Pro60–Pro87 form a required for dimerization upon membrane association region. The stretch at Asp180–Met201 forms a coiled coil. Residues Phe218–Glu254 are interaction with ARC. In terms of domain architecture, SH3 spans Val291–Pro350.

Belongs to the endophilin family. Interacts with ARC. Interacts with SYNJ1 and DNM1. As to expression, highest level in a region associated with endocytosis of yolk proteins in developing oocytes (at protein level). Highest level in small ovarian follicles. High levels in brain and testis. Lower level in adrenal glands.

The protein localises to the cytoplasm. The protein resides in the early endosome membrane. Its function is as follows. Implicated in endocytosis. May recruit other proteins to membranes with high curvature. Implicated in endocytosis of yolk proteins during oogenesis. This chain is Endophilin-A3, found in Gallus gallus (Chicken).